The following is a 265-amino-acid chain: Palmitoyltransferase ZDHHC21 (265 aa).

Residues 1–16 (MGLRIHFVVDPHGWCC) lie on the Cytoplasmic side of the membrane. A helical membrane pass occupies residues 17–37 (MGLIVFVWLYNFFLIPKIVLF). Residues 38–44 (PHYEEGH) are Extracellular-facing. Residues 45–65 (IPGILIIIFYGIAMFCLVALV) traverse the membrane as a helical segment. At 66 to 133 (RASITDPGRL…NNCVGEDNHW (68 aa)) the chain is on the cytoplasmic side. The region spanning 90 to 140 (ELCNKCNLMRPKRSHHCSRCGHCVRRMDHHCPWINNCVGEDNHWLFLQLCF) is the DHHC domain. Cysteine 120 serves as the catalytic S-palmitoyl cysteine intermediate. A helical membrane pass occupies residues 134-154 (LFLQLCFYTELLTCYALMFSF). The Extracellular segment spans residues 155 to 185 (CHYYYFLPLKKRNLDLFVVRHELAIMRLAAF). The helical transmembrane segment at 186–206 (MGITMLVGITGLFYTQLIGII) threads the bilayer. Residues 207-265 (TDTTSIEKMSNCCEEISRPRKPWQQTFSEVFGTRWKILWFIPFRRRQPLRVPYHFANHV) are Cytoplasmic-facing.

The protein belongs to the DHHC palmitoyltransferase family.

It is found in the golgi apparatus membrane. The protein resides in the golgi apparatus. Its subcellular location is the cis-Golgi network membrane. The protein localises to the cell membrane. It catalyses the reaction L-cysteinyl-[protein] + hexadecanoyl-CoA = S-hexadecanoyl-L-cysteinyl-[protein] + CoA. In terms of biological role, palmitoyltransferase that catalyzes the addition of palmitate onto various protein substrates. Palmitoylates sex steroid hormone receptors, including ESR1, PGR and AR, thereby regulating their targeting to the plasma membrane. This affects rapid intracellular signaling by sex hormones via ERK and AKT kinases and the generation of cAMP, but does not affect that mediated by their nuclear receptor. Palmitoylates FYN, regulates its localization in hair follicles and plays a key role in epidermal homeostasis and hair follicle differentiation. Through the palmitoylation of PLCB1 and the regulation of PLCB1 downstream signaling may indirectly regulate the function of the endothelial barrier and the adhesion of leukocytes to the endothelium. Also has a palmitoyltransferase activity toward ADRA1D, positively regulating its activity and expression and may thereby play a role in vascular contraction. May also palmitoylate eNOS and LCK. This is Palmitoyltransferase ZDHHC21 from Bos taurus (Bovine).